We begin with the raw amino-acid sequence, 129 residues long: Prefoldin subunit 4 (129 aa).

Position 1 is an N-acetylmethionine (Met-1).

The protein belongs to the prefoldin subunit beta family. Heterohexamer of two PFD-alpha type and four PFD-beta type subunits.

Functionally, binds specifically to cytosolic chaperonin (c-CPN) and transfers target proteins to it. Binds to nascent polypeptide chain and promotes folding in an environment in which there are many competing pathways for nonnative proteins. The chain is Prefoldin subunit 4 (GIM3) from Saccharomyces cerevisiae (strain ATCC 204508 / S288c) (Baker's yeast).